A 379-amino-acid chain; its full sequence is MPILSTEIFNEADAGFVYQSNSNDYSDGFEGPEKKLDIRFGPISKGSVKSIAGSPSKVGLRTIDKEKWQTVLDSARCTIISQTSNDHMDSYVLSESSLFVYPRRAMIKTCGTTTLLHLIAKMVQVGKECGLEVEMVVFSRKNLNQPSKQVFPHCSFSDEVNFLNKIFDGQAYVMGDVNKDHWNLYIADFRKNPTLQRTEQTFEVMMHDLDETVMKQFFKREGVSAWDTTVNSGIADLLPGSMIDDFQFDPCGYSMNGLLNEFYWTIHITPESHCSYVSFDTNVALADYNQLLAKVLNVFKPGRFTAALYAEDGAPCGDPYTAFDVNVPSYAIQNKTVHGFDGGYDVVVSNYQQLDKKVNFSNDDLIQSIESTNIDLIQV.

Active-site residues include glutamate 30 and glutamate 33. Serine 96 (schiff-base intermediate with substrate; via pyruvic acid) is an active-site residue. At serine 96 the chain carries Pyruvic acid (Ser); by autocatalysis. Residue cysteine 110 is the Proton donor; for catalytic activity of the active site. Catalysis depends on proton acceptor; for processing activity residues serine 254 and histidine 267.

This sequence belongs to the eukaryotic AdoMetDC family. Heterotetramer of two alpha and two beta chains. The cofactor is pyruvate. Is synthesized initially as an inactive proenzyme. Formation of the active enzyme involves a self-maturation process in which the active site pyruvoyl group is generated from an internal serine residue via an autocatalytic post-translational modification. Two non-identical subunits are generated from the proenzyme in this reaction, and the pyruvate is formed at the N-terminus of the alpha chain, which is derived from the carboxyl end of the proenzyme. The post-translation cleavage follows an unusual pathway, termed non-hydrolytic serinolysis, in which the side chain hydroxyl group of the serine supplies its oxygen atom to form the C-terminus of the beta chain, while the remainder of the serine residue undergoes an oxidative deamination to produce ammonia and the pyruvoyl group blocking the N-terminus of the alpha chain.

It carries out the reaction S-adenosyl-L-methionine + H(+) = S-adenosyl 3-(methylsulfanyl)propylamine + CO2. Its pathway is amine and polyamine biosynthesis; S-adenosylmethioninamine biosynthesis; S-adenosylmethioninamine from S-adenosyl-L-methionine: step 1/1. In terms of biological role, S-adenosylmethionine decarboxylase is essential for the biosynthesis of spermine and spermidine. The alpha subunit contains the active site. This is S-adenosylmethionine decarboxylase proenzyme (amd1) from Dictyostelium discoideum (Social amoeba).